Consider the following 165-residue polypeptide: MAESFSFDVVSDFERQELVNTLDQVKREISQRYDLKGTDTVVDLDKENIFITTNSELTLNSVNDIIRQKAIKRNLSLKIFDYGEIETVSGNKLKQTILLKQGIKQEIAKKISKSIRDQFKKINVSINGETLRVSSKSKNDLQLAIKLISQLEESLNIPLKANNFR.

It belongs to the YajQ family.

Nucleotide-binding protein. In Prochlorococcus marinus (strain MIT 9312), this protein is Nucleotide-binding protein PMT9312_0481.